The chain runs to 323 residues: MQIALAPMEGLVDNILRDVLTRVGGIDWCVTEFIRVCDRLLPASSFDKLAPELRQGARTAAGVPMRVQLLGSDPVCLAENAALACELGAPVIDLNFGCPAKTVNKSRGGAVLLKEPELLHAIVREVRRAVPANIPVTSKMRLGFDSPDGALECATALAEGGSAHLVVHARTKVEGYKPPAHWEWVARVQDVVKVPVFANGEIWTVDDWRRCREVSGAEDIMLGRGLVSRPDLGLQIAAARDGRDYQPMSWHDLLPLLREFWRQAQAKLSPRYAPGRMKQWLAMLTRSYPEAVVLFAELRREDDCARISRLLGVEAQVLEACVA.

Residues Pro7–Glu9 and Gln68 contribute to the FMN site. The Proton donor role is filled by Cys98. Residues Lys139, Asn199 to Glu201, and Gly223 to Arg224 contribute to the FMN site.

Belongs to the Dus family. DusC subfamily. FMN serves as cofactor.

The catalysed reaction is 5,6-dihydrouridine(16) in tRNA + NADP(+) = uridine(16) in tRNA + NADPH + H(+). The enzyme catalyses 5,6-dihydrouridine(16) in tRNA + NAD(+) = uridine(16) in tRNA + NADH + H(+). Catalyzes the synthesis of 5,6-dihydrouridine (D), a modified base found in the D-loop of most tRNAs, via the reduction of the C5-C6 double bond in target uridines. Specifically modifies U16 in tRNAs. This Pseudomonas putida (strain ATCC 47054 / DSM 6125 / CFBP 8728 / NCIMB 11950 / KT2440) protein is tRNA-dihydrouridine(16) synthase.